The following is a 188-amino-acid chain: Gamma-glutamylcyclotransferase (188 aa).

19-24 contributes to the substrate binding site; it reads YFAYGS. Glu98 functions as the Proton acceptor in the catalytic mechanism. A substrate-binding site is contributed by Tyr139. Ser173 bears the Phosphoserine mark.

This sequence belongs to the gamma-glutamylcyclotransferase family. Homodimer.

It carries out the reaction an alpha-(gamma-L-glutamyl)-L-amino acid = 5-oxo-L-proline + an L-alpha-amino acid. Catalyzes the formation of 5-oxoproline from gamma-glutamyl dipeptides and may play a significant role in glutathione homeostasis. Induces release of cytochrome c from mitochondria with resultant induction of apoptosis. In Homo sapiens (Human), this protein is Gamma-glutamylcyclotransferase.